The following is a 137-amino-acid chain: Large ribosomal subunit protein uL16 (137 aa).

The protein belongs to the universal ribosomal protein uL16 family. As to quaternary structure, part of the 50S ribosomal subunit.

Functionally, binds 23S rRNA and is also seen to make contacts with the A and possibly P site tRNAs. In Rhizobium etli (strain CIAT 652), this protein is Large ribosomal subunit protein uL16.